The primary structure comprises 512 residues: FAD-linked oxidoreductase iacH (512 aa).

The N-terminal stretch at 1–22 is a signal peptide; that stretch reads MVSLKACVVAYGFTLLPALVSG. Asparagine 39, asparagine 55, asparagine 69, asparagine 210, asparagine 217, asparagine 278, asparagine 295, and asparagine 367 each carry an N-linked (GlcNAc...) asparagine glycan. One can recognise an FAD-binding PCMH-type domain in the interval 77–248; sequence LDTPDVQLVV…TSLEKKIYPG (172 aa).

The protein belongs to the oxygen-dependent FAD-linked oxidoreductase family. It depends on FAD as a cofactor.

It functions in the pathway secondary metabolite biosynthesis. Its function is as follows. FAD-linked oxidoreductase; part of the gene cluster that mediates the biosynthesis of iso-A82775C, a enylepoxycyclohexane and biosynthetic precursor of the chloropestolide anticancer natural products. Within the cluster, the prenyltransferase iacE prenylates siccayne to generate pestalodiol E, using dimethylallyl diphosphate (DMAPP) as cosubstrate. The probable oxidoreductase iacF is then involved in the epoxidation of pestalodiol F to pestalodiol F, which is further converted to pestalofone A by the short-chain dehydrogenase/reductase iacG. Iso-A82775C is subsequently generated from pestalofone A by the short-chain dehydrogenase/reductase iacC. Iso-A82775C is further condensed with maldoxin via a Diels-Alder reaction to produce the anticancer natural products chloropestolides A to E. This is FAD-linked oxidoreductase iacH from Pestalotiopsis fici (strain W106-1 / CGMCC3.15140).